The primary structure comprises 256 residues: uncharacterized protein (256 aa).

The protein belongs to the metallo-beta-lactamase superfamily.

This is an uncharacterized protein from Methanocaldococcus jannaschii (strain ATCC 43067 / DSM 2661 / JAL-1 / JCM 10045 / NBRC 100440) (Methanococcus jannaschii).